Consider the following 257-residue polypeptide: Beta-fibrinogenase mucrofibrase-3 (257 aa).

Positions 1–18 (MVLIRVLANLLILQLSYA) are cleaved as a signal peptide. Residues 19-24 (QKSSEL) constitute a propeptide that is removed on maturation. The 224-residue stretch at 25–248 (VIGGDECNIN…HLDWIKGIIA (224 aa)) folds into the Peptidase S1 domain. Intrachain disulfides connect C31-C162, C49-C65, C97-C255, C141-C209, C173-C188, and C199-C224. Residues H64 and D109 each act as charge relay system in the active site. S203 serves as the catalytic Charge relay system.

The protein belongs to the peptidase S1 family. Snake venom subfamily. As to quaternary structure, monomer. As to expression, expressed by the venom gland.

It is found in the secreted. In terms of biological role, snake venom serine protease with fibrinogenolytic activities. Cleaves beta-chain of fibrinogen (FGB) efficiently and shows relatively lower activity on alpha-chain. The chain is Beta-fibrinogenase mucrofibrase-3 from Protobothrops mucrosquamatus (Taiwan habu).